The sequence spans 254 residues: MIRILLSNDDGISAPGIQTLASALRGFAQVQIVAPDRNRSGASNALTLDSALRITTLSNGDIAVQQGTPTDCVYLGVNALMRPRPDIVVSGINAGPNLGDDVIYSGTVAAAMEGRHLGYPALAVSLNGHQHYDTAAAVTCRLLRALQRKPLRTGKILNINVPDLPLAEIKGIRVTRCGSRHPAEQVFCQQDPRGQDLYWIGPPGEKYDAGPDTDFAAVEQGYVSITPLQVDLTAYMAQEVVESWLANTEVDGEW.

Residues Asp-9, Asp-10, Ser-40, and Asn-93 each contribute to the a divalent metal cation site.

The protein belongs to the SurE nucleotidase family. Requires a divalent metal cation as cofactor.

It is found in the cytoplasm. The enzyme catalyses a ribonucleoside 5'-phosphate + H2O = a ribonucleoside + phosphate. The catalysed reaction is a ribonucleoside 3'-phosphate + H2O = a ribonucleoside + phosphate. It carries out the reaction [phosphate](n) + H2O = [phosphate](n-1) + phosphate + H(+). Functionally, nucleotidase with a broad substrate specificity as it can dephosphorylate various ribo- and deoxyribonucleoside 5'-monophosphates and ribonucleoside 3'-monophosphates with highest affinity to 3'-AMP. Also hydrolyzes polyphosphate (exopolyphosphatase activity) with the preference for short-chain-length substrates (P20-25). Might be involved in the regulation of dNTP and NTP pools, and in the turnover of 3'-mononucleotides produced by numerous intracellular RNases (T1, T2, and F) during the degradation of various RNAs. The sequence is that of 5'/3'-nucleotidase SurE from Yersinia pestis bv. Antiqua (strain Antiqua).